The chain runs to 564 residues: uncharacterized protein (564 aa).

An N-terminal signal peptide occupies residues 1–21; that stretch reads MRRIGAITALSLPVLLSLLYS. Cysteine 22 carries N-palmitoyl cysteine lipidation. Cysteine 22 is lipidated: S-diacylglycerol cysteine.

The protein resides in the cell membrane. This is an uncharacterized protein from Aquifex aeolicus (strain VF5).